The sequence spans 1140 residues: uncharacterized protein (1140 aa).

The next 2 helical transmembrane spans lie at 8–28 (FLLF…SAFT) and 1098–1118 (IAIT…SGVV).

It to M.pneumoniae MPN_375 (in the N-terminal section), M.pneumoniae MPN_374 (in the central section) and M.pneumoniae MPN_373 (in the C-terminal section).

Its subcellular location is the cell membrane. This is an uncharacterized protein from Mycoplasma pneumoniae (strain ATCC 29342 / M129 / Subtype 1) (Mycoplasmoides pneumoniae).